Reading from the N-terminus, the 329-residue chain is Phospholipid scramblase 4 (329 aa).

The interval 1-51 (MSGVVPTAPEQPAGEMENQTKPPDPRPDAPPEYNSHFLPGPPGTAVPPPTG) is disordered. Positions 1 to 98 (MSGVVPTAPE…PMPNQSVPIT (98 aa)) are proline-rich domain (PRD). Over 1–303 (MSGVVPTAPE…IHFPLDLDVK (303 aa)) the chain is Cytoplasmic. The short motif at 18–25 (NQTKPPDP) is the SH3-binding 1 element. A PPxY motif motif is present at residues 30-33 (PPEY). Residues 39–51 (PGPPGTAVPPPTG) show a composition bias toward pro residues. The SH3-binding 2 signature appears at 41–49 (PPGTAVPPP). 2 positions are modified to phosphotyrosine; by ABL: tyrosine 83 and tyrosine 88. The SH3-binding 3 motif lies at 98-106 (TWMPGPTPM). 5 S-palmitoyl cysteine lipidation sites follow: cysteine 197, cysteine 198, cysteine 199, cysteine 201, and cysteine 202. The Nuclear localization signal signature appears at 271-283 (NIGSIIRKWNGLL). A helical transmembrane segment spans residues 304–320 (MKAMIFGACFLIDFMYF). Residues 321-329 (ERSPPQRSR) are Extracellular-facing.

Belongs to the phospholipid scramblase family. Interacts with PDCD6. Interacts with KPNA2; this interaction mediates the nucleus import of PLSCR4. Ca(2+) is required as a cofactor. It depends on Mg(2+) as a cofactor. Requires Zn(2+) as cofactor. Expressed in heart, brain, placenta, lung, liver, kidney, pancreas, spleen, thymus, prostate, testis, uterus, small intestine and colon. Not detected in peripheral blood lymphocytes.

The protein localises to the cell membrane. Its subcellular location is the nucleus. The catalysed reaction is a 1,2-diacyl-sn-glycero-3-phosphocholine(in) = a 1,2-diacyl-sn-glycero-3-phosphocholine(out). It carries out the reaction a 1,2-diacyl-sn-glycero-3-phospho-L-serine(in) = a 1,2-diacyl-sn-glycero-3-phospho-L-serine(out). In terms of biological role, catalyzes metal ion-induced ATP-independent rapid bidirectional and non-specific movement of phospholipids (lipid scrambling or lipid flip-flop) between the inner and outer leaflet of the plasma membrane and participates in the redistribution of phospholipids between membrane leaflets. Metal ions bind to the calcium-binding site and induce conformation change in the protein. Has a greater affi nity for Ca(2+) than Mg(2+) and Zn(2+). The sequence is that of Phospholipid scramblase 4 from Homo sapiens (Human).